The following is a 274-amino-acid chain: Mitochondrial outer membrane protein porin 3 (274 aa).

Serine 76 is subject to Phosphoserine.

It belongs to the eukaryotic mitochondrial porin (TC 1.B.8.1) family. Interacts with KIN14F/KP1. Interacts with FBA6 and GAPC1. In terms of tissue distribution, expressed in leaf tips, anthers and stigma.

The protein localises to the cell membrane. It is found in the mitochondrion outer membrane. Forms a channel through the mitochondrial outer membrane that allows diffusion of small hydrophilic molecules. The channel adopts an open conformation at low or zero membrane potential and a closed conformation at potentials above 30-40 mV. The open state has a weak anion selectivity whereas the closed state is cation-selective. The protein is Mitochondrial outer membrane protein porin 3 (VDAC3) of Arabidopsis thaliana (Mouse-ear cress).